The following is a 227-amino-acid chain: Cytochrome c oxidase subunit 2 (227 aa).

Topologically, residues 1–14 (MAYPFQLGLQDATS) are mitochondrial intermembrane. Residues 15-45 (PIMEELLHFHDHTLMIVFLISSLVLYIITLM) traverse the membrane as a helical segment. Topologically, residues 46-59 (LTTKLTHTSTMDAQ) are mitochondrial matrix. A helical transmembrane segment spans residues 60–87 (EVETVWTILPAIILILIALPSLRILYMM). At 88 to 227 (DEINNPSLTV…YFETWSAVMV (140 aa)) the chain is on the mitochondrial intermembrane side. Positions 161, 196, 198, 200, 204, and 207 each coordinate Cu cation. Glutamate 198 provides a ligand contact to Mg(2+). Tyrosine 218 bears the Phosphotyrosine mark.

This sequence belongs to the cytochrome c oxidase subunit 2 family. In terms of assembly, component of the cytochrome c oxidase (complex IV, CIV), a multisubunit enzyme composed of 14 subunits. The complex is composed of a catalytic core of 3 subunits MT-CO1, MT-CO2 and MT-CO3, encoded in the mitochondrial DNA, and 11 supernumerary subunits COX4I, COX5A, COX5B, COX6A, COX6B, COX6C, COX7A, COX7B, COX7C, COX8 and NDUFA4, which are encoded in the nuclear genome. The complex exists as a monomer or a dimer and forms supercomplexes (SCs) in the inner mitochondrial membrane with NADH-ubiquinone oxidoreductase (complex I, CI) and ubiquinol-cytochrome c oxidoreductase (cytochrome b-c1 complex, complex III, CIII), resulting in different assemblies (supercomplex SCI(1)III(2)IV(1) and megacomplex MCI(2)III(2)IV(2)). Found in a complex with TMEM177, COA6, COX18, COX20, SCO1 and SCO2. Interacts with TMEM177 in a COX20-dependent manner. Interacts with COX20. Interacts with COX16. Cu cation is required as a cofactor.

It is found in the mitochondrion inner membrane. It catalyses the reaction 4 Fe(II)-[cytochrome c] + O2 + 8 H(+)(in) = 4 Fe(III)-[cytochrome c] + 2 H2O + 4 H(+)(out). Its function is as follows. Component of the cytochrome c oxidase, the last enzyme in the mitochondrial electron transport chain which drives oxidative phosphorylation. The respiratory chain contains 3 multisubunit complexes succinate dehydrogenase (complex II, CII), ubiquinol-cytochrome c oxidoreductase (cytochrome b-c1 complex, complex III, CIII) and cytochrome c oxidase (complex IV, CIV), that cooperate to transfer electrons derived from NADH and succinate to molecular oxygen, creating an electrochemical gradient over the inner membrane that drives transmembrane transport and the ATP synthase. Cytochrome c oxidase is the component of the respiratory chain that catalyzes the reduction of oxygen to water. Electrons originating from reduced cytochrome c in the intermembrane space (IMS) are transferred via the dinuclear copper A center (CU(A)) of subunit 2 and heme A of subunit 1 to the active site in subunit 1, a binuclear center (BNC) formed by heme A3 and copper B (CU(B)). The BNC reduces molecular oxygen to 2 water molecules using 4 electrons from cytochrome c in the IMS and 4 protons from the mitochondrial matrix. The polypeptide is Cytochrome c oxidase subunit 2 (MT-CO2) (Vulpes vulpes (Red fox)).